Consider the following 37-residue polypeptide: Cytochrome b6-f complex subunit 5 (37 aa).

Residues 5–25 (LLSGIVLGLISITSAGLFVTA) traverse the membrane as a helical segment.

Belongs to the PetG family. In terms of assembly, the 4 large subunits of the cytochrome b6-f complex are cytochrome b6, subunit IV (17 kDa polypeptide, PetD), cytochrome f and the Rieske protein, while the 4 small subunits are PetG, PetL, PetM and PetN. The complex functions as a dimer.

The protein localises to the plastid. It localises to the chloroplast thylakoid membrane. Functionally, component of the cytochrome b6-f complex, which mediates electron transfer between photosystem II (PSII) and photosystem I (PSI), cyclic electron flow around PSI, and state transitions. PetG is required for either the stability or assembly of the cytochrome b6-f complex. The chain is Cytochrome b6-f complex subunit 5 from Psilotum nudum (Whisk fern).